The chain runs to 801 residues: Probable phosphoketolase (801 aa).

Belongs to the XFP family. The cofactor is thiamine diphosphate.

The sequence is that of Probable phosphoketolase from Bradyrhizobium diazoefficiens (strain JCM 10833 / BCRC 13528 / IAM 13628 / NBRC 14792 / USDA 110).